The primary structure comprises 623 residues: DNA mismatch repair protein MutL (623 aa).

Residues Ala353–Ser368 show a composition bias toward polar residues. The interval Ala353–His389 is disordered.

Belongs to the DNA mismatch repair MutL/HexB family.

In terms of biological role, this protein is involved in the repair of mismatches in DNA. It is required for dam-dependent methyl-directed DNA mismatch repair. May act as a 'molecular matchmaker', a protein that promotes the formation of a stable complex between two or more DNA-binding proteins in an ATP-dependent manner without itself being part of a final effector complex. The protein is DNA mismatch repair protein MutL of Brucella melitensis biotype 1 (strain ATCC 23456 / CCUG 17765 / NCTC 10094 / 16M).